The sequence spans 624 residues: Probable potassium transport system protein Kup (624 aa).

A run of 12 helical transmembrane segments spans residues 16-36 (ALLT…SPLY), 59-79 (IISM…VMLV), 106-126 (FVAV…VITP), 147-167 (FILP…PLGT), 174-194 (FGPI…PQII), 211-231 (LIVA…LTVT), 252-272 (WFCV…ALVI), 292-312 (IPLV…VISG), 342-362 (IYMP…VLVF), 371-391 (AYGL…LIYV), 394-414 (TWWK…LLFA), and 418-438 (TKIH…IVVM).

It belongs to the HAK/KUP transporter (TC 2.A.72) family.

It is found in the cell membrane. It carries out the reaction K(+)(in) + H(+)(in) = K(+)(out) + H(+)(out). Transport of potassium into the cell. Likely operates as a K(+):H(+) symporter. In Corynebacterium glutamicum (strain ATCC 13032 / DSM 20300 / JCM 1318 / BCRC 11384 / CCUG 27702 / LMG 3730 / NBRC 12168 / NCIMB 10025 / NRRL B-2784 / 534), this protein is Probable potassium transport system protein Kup.